The chain runs to 926 residues: Translation initiation factor IF-2 (926 aa).

Disordered stretches follow at residues 1 to 185 and 200 to 299; these read MTDS…EEVE and EDKA…RRRG. Low complexity-rich tracts occupy residues 13–24 and 70–96; these read TGKKTLTLKPTG and APAT…AAPQ. Polar residues predominate over residues 110-133; the sequence is TNQYSQQRHPGQQNRPQASSQPSR. Residues 151-185 are compositionally biased toward basic and acidic residues; sequence MDARRRALAEAQVREVEDAKRRAEEEVRRQAEEVE. Over residues 211 to 251 the composition is skewed to low complexity; that stretch reads APEPVAEPVAPVAETPRAADPAPRAPSPAGAKPAAGAPAPS. In terms of domain architecture, tr-type G spans 424 to 591; that stretch reads SRPPVVTIMG…AVLLQAEILD (168 aa). The interval 433–440 is G1; that stretch reads GHVDHGKT. 433–440 serves as a coordination point for GTP; the sequence is GHVDHGKT. The segment at 458 to 462 is G2; sequence GITQH. The interval 479-482 is G3; the sequence is DTPG. GTP contacts are provided by residues 479-483 and 533-536; these read DTPGH and NKID. Residues 533 to 536 are G4; it reads NKID. The tract at residues 569–571 is G5; it reads SAK.

Belongs to the TRAFAC class translation factor GTPase superfamily. Classic translation factor GTPase family. IF-2 subfamily.

The protein localises to the cytoplasm. In terms of biological role, one of the essential components for the initiation of protein synthesis. Protects formylmethionyl-tRNA from spontaneous hydrolysis and promotes its binding to the 30S ribosomal subunits. Also involved in the hydrolysis of GTP during the formation of the 70S ribosomal complex. The polypeptide is Translation initiation factor IF-2 (Allorhizobium ampelinum (strain ATCC BAA-846 / DSM 112012 / S4) (Agrobacterium vitis (strain S4))).